The primary structure comprises 230 residues: Cytidylate kinase (230 aa).

Residue 12-20 coordinates ATP; sequence GPSGAGKGT.

This sequence belongs to the cytidylate kinase family. Type 1 subfamily.

The protein resides in the cytoplasm. It carries out the reaction CMP + ATP = CDP + ADP. The enzyme catalyses dCMP + ATP = dCDP + ADP. The chain is Cytidylate kinase from Shewanella halifaxensis (strain HAW-EB4).